Here is a 465-residue protein sequence, read N- to C-terminus: Gamma-aminobutyric acid receptor subunit gamma-1 (465 aa).

The signal sequence occupies residues 1-20 (MGSGKAFLFSPSLLWSQTRG). Over 21 to 273 (VRLIFLLLTL…FDLSRRMGYF (253 aa)) the chain is Extracellular. 2 N-linked (GlcNAc...) asparagine glycosylation sites follow: Asn-50 and Asn-127. Cys-188 and Cys-202 are disulfide-bonded. A glycan (N-linked (GlcNAc...) asparagine) is linked at Asn-245. The chain crosses the membrane as a helical span at residues 274-294 (TIQTYIPCILTVVLSWVSFWI). Topologically, residues 295-300 (NKDAVP) are cytoplasmic. Residues 301–320 (ARTSLGITTVLTMTTLSTIA) form a helical membrane-spanning segment. At 321 to 328 (RKSLPKVS) the chain is on the extracellular side. Residues 329–349 (YVTAMDLFVSVCFIFVFAALM) form a helical membrane-spanning segment. Residues 350–444 (EYGTLHYFTS…RIAKIDSYSR (95 aa)) lie on the Cytoplasmic side of the membrane. The helical transmembrane segment at 445-465 (IFFPTAFALFNLVYWVGYLYL) threads the bilayer.

It belongs to the ligand-gated ion channel (TC 1.A.9) family. Gamma-aminobutyric acid receptor (TC 1.A.9.5) subfamily. GABRG1 sub-subfamily. As to quaternary structure, heteropentamer, formed by a combination of alpha (GABRA1-6), beta (GABRB1-3), gamma (GABRG1-3), delta (GABRD), epsilon (GABRE), rho (GABRR1-3), pi (GABRP) and theta (GABRQ) chains, each subunit exhibiting distinct physiological and pharmacological properties. In terms of processing, may be palmitoylated. In terms of tissue distribution, expressed in brain.

Its subcellular location is the postsynaptic cell membrane. It localises to the cell membrane. The enzyme catalyses chloride(in) = chloride(out). Its function is as follows. Gamma subunit of the heteropentameric ligand-gated chloride channel gated by gamma-aminobutyric acid (GABA), a major inhibitory neurotransmitter in the brain. GABA-gated chloride channels, also named GABA(A) receptors (GABAAR), consist of five subunits arranged around a central pore and contain GABA active binding site(s) located at the alpha and beta subunit interface(s). When activated by GABA, GABAARs selectively allow the flow of chloride anions across the cell membrane down their electrochemical gradient. Chloride influx into the postsynaptic neuron following GABAAR opening decreases the neuron ability to generate a new action potential, thereby reducing nerve transmission. This is Gamma-aminobutyric acid receptor subunit gamma-1 from Mus musculus (Mouse).